Reading from the N-terminus, the 232-residue chain is Ribonuclease 3 (232 aa).

Residues 5 to 134 form the RNase III domain; the sequence is QTVLKNHFAI…FLGALLLDKD (130 aa). Residue Glu-47 coordinates Mg(2+). The active site involves Asp-51. Residues Asp-120 and Glu-123 each coordinate Mg(2+). Residue Glu-123 is part of the active site. Positions 160 to 229 constitute a DRBM domain; sequence DYKTHLQELL…AKNAVEKGLD (70 aa).

This sequence belongs to the ribonuclease III family. As to quaternary structure, homodimer. Mg(2+) serves as cofactor.

The protein resides in the cytoplasm. The enzyme catalyses Endonucleolytic cleavage to 5'-phosphomonoester.. Digests double-stranded RNA. Involved in the processing of primary rRNA transcript to yield the immediate precursors to the large and small rRNAs (23S and 16S). Processes some mRNAs, and tRNAs when they are encoded in the rRNA operon. Processes pre-crRNA and tracrRNA of type II CRISPR loci if present in the organism. The protein is Ribonuclease 3 of Streptococcus pneumoniae (strain Taiwan19F-14).